We begin with the raw amino-acid sequence, 188 residues long: Elongation factor P-like protein (188 aa).

This sequence belongs to the elongation factor P family.

The chain is Elongation factor P-like protein from Alcanivorax borkumensis (strain ATCC 700651 / DSM 11573 / NCIMB 13689 / SK2).